The primary structure comprises 147 residues: Large ribosomal subunit protein bL9 (147 aa).

The segment at 40–60 is disordered; that stretch reads TTGNLKQHEAHERKAAEEAKQ. Residues 45 to 59 show a composition bias toward basic and acidic residues; the sequence is KQHEAHERKAAEEAK.

The protein belongs to the bacterial ribosomal protein bL9 family.

Binds to the 23S rRNA. In Exiguobacterium sibiricum (strain DSM 17290 / CCUG 55495 / CIP 109462 / JCM 13490 / 255-15), this protein is Large ribosomal subunit protein bL9.